A 322-amino-acid polypeptide reads, in one-letter code: GDSL esterase/lipase At2g04020 (322 aa).

The first 26 residues, 1 to 26 (MGLPSSLESYLLLILLSFLNVSTIYS), serve as a signal peptide directing secretion. Catalysis depends on Ser50, which acts as the Nucleophile. Asn260 carries an N-linked (GlcNAc...) asparagine glycan. Residues Asp296 and His299 contribute to the active site.

It belongs to the 'GDSL' lipolytic enzyme family.

The protein resides in the secreted. The protein is GDSL esterase/lipase At2g04020 of Arabidopsis thaliana (Mouse-ear cress).